The sequence spans 193 residues: MSTPTAYEHDADGSKFIPATQRPDGTWRKPRRIKEGYVPQEEVPLYESKGKQFRARQNDGLPVGLTPEIVAQAQKKKGQRSTIQPIPGMIITVEKKKKKKKTVTGVEEAAEKLAKCEIQEPTLPSQSVPTESISQSDPTKRLKNLRKKLREIEFLEEKIKAGLLKSPDKDQKEKMSKKNEILNEIDILKNSIL.

Disordered regions lie at residues 1-27 and 118-142; these read MSTP…DGTW and IQEP…TKRL. Polar residues predominate over residues 122 to 137; the sequence is TLPSQSVPTESISQSD. Positions 139 to 192 form a coiled coil; sequence TKRLKNLRKKLREIEFLEEKIKAGLLKSPDKDQKEKMSKKNEILNEIDILKNSI.

This sequence belongs to the pym family. Interacts (via N-terminus) with mago and tsu/Y14; the interaction is direct.

It localises to the cytoplasm. It is found in the nucleus. Regulator of the exon junction complex (EJC), a multiprotein complex that associates immediately upstream of the exon-exon junction on mRNAs and serves as a positional landmarks for the intron exon structure of genes and directs post-transcriptional processes in the cytoplasm such as mRNA export, nonsense-mediated mRNA decay (NMD) or translation. This chain is Partner of Y14 and mago, found in Bombyx mori (Silk moth).